The following is an 870-amino-acid chain: Protein translocase subunit SecA (870 aa).

Residues Gln86, 104–108 (GEGKT), and Asp499 each bind ATP. Cys854, Cys856, Cys865, and His866 together coordinate Zn(2+).

Belongs to the SecA family. In terms of assembly, monomer and homodimer. Part of the essential Sec protein translocation apparatus which comprises SecA, SecYEG and auxiliary proteins SecDF-YajC and YidC. The cofactor is Zn(2+).

Its subcellular location is the cell inner membrane. The protein resides in the cytoplasm. It carries out the reaction ATP + H2O + cellular proteinSide 1 = ADP + phosphate + cellular proteinSide 2.. In terms of biological role, part of the Sec protein translocase complex. Interacts with the SecYEG preprotein conducting channel. Has a central role in coupling the hydrolysis of ATP to the transfer of proteins into and across the cell membrane, serving both as a receptor for the preprotein-SecB complex and as an ATP-driven molecular motor driving the stepwise translocation of polypeptide chains across the membrane. The polypeptide is Protein translocase subunit SecA (Ehrlichia ruminantium (strain Welgevonden)).